The following is a 504-amino-acid chain: Cytoplasmic dynein 1 light intermediate chain 1 (504 aa).

Position 35–42 (Gly-35–Ser-42) interacts with ATP. Composition is skewed to low complexity over residues Thr-167 to Thr-189, Asn-392 to Leu-425, and Ser-437 to Pro-446. Disordered regions lie at residues Thr-167–Lys-195, Leu-383–Pro-446, and Asp-464–Lys-504. Residues Asp-464–Lys-473 show a composition bias toward basic and acidic residues. The span at Ser-475–Asn-487 shows a compositional bias: polar residues. Over residues Ala-488–Lys-504 the composition is skewed to basic and acidic residues.

This sequence belongs to the dynein light intermediate chain family. In terms of assembly, homodimer. The cytoplasmic dynein 1 complex consists of two catalytic heavy chains (HCs) and a number of non-catalytic subunits presented by intermediate chains (ICs), light intermediate chains (LICs) and light chains (LCs).

It is found in the cytoplasm. Its subcellular location is the cytoskeleton. Its function is as follows. Acts as one of several non-catalytic accessory components of the cytoplasmic dynein 1 complex that are thought to be involved in linking dynein to cargos and to adapter proteins that regulate dynein function. Cytoplasmic dynein 1 acts as a motor for the intracellular retrograde motility of vesicles and organelles along microtubules. May play a role in binding dynein to membranous organelles or chromosomes. The protein is Cytoplasmic dynein 1 light intermediate chain 1 (dync1li1) of Dictyostelium discoideum (Social amoeba).